The primary structure comprises 55 residues: Small ribosomal subunit protein bS21 (55 aa).

It belongs to the bacterial ribosomal protein bS21 family.

The protein is Small ribosomal subunit protein bS21 of Ureaplasma parvum serovar 3 (strain ATCC 27815 / 27 / NCTC 11736).